The sequence spans 246 residues: Ribonuclease PH (246 aa).

Phosphate contacts are provided by residues Arg91 and 129-131 (GTR).

Belongs to the RNase PH family. As to quaternary structure, homohexameric ring arranged as a trimer of dimers.

The enzyme catalyses tRNA(n+1) + phosphate = tRNA(n) + a ribonucleoside 5'-diphosphate. In terms of biological role, phosphorolytic 3'-5' exoribonuclease that plays an important role in tRNA 3'-end maturation. Removes nucleotide residues following the 3'-CCA terminus of tRNAs; can also add nucleotides to the ends of RNA molecules by using nucleoside diphosphates as substrates, but this may not be physiologically important. Probably plays a role in initiation of 16S rRNA degradation (leading to ribosome degradation) during starvation. This Burkholderia orbicola (strain MC0-3) protein is Ribonuclease PH.